A 492-amino-acid chain; its full sequence is Catalase (492 aa).

Residues H65 and N138 contribute to the active site. Position 348 (Y348) interacts with heme.

This sequence belongs to the catalase family. In terms of assembly, homotetramer. Heme serves as cofactor.

The protein resides in the cytoplasm. Its subcellular location is the cytosol. The protein localises to the peroxisome matrix. It carries out the reaction 2 H2O2 = O2 + 2 H2O. Its function is as follows. Catalyzes the degradation of hydrogen peroxide (H(2)O(2)) generated by peroxisomal oxidases to water and oxygen, thereby protecting cells from the toxic effects of hydrogen peroxide. This chain is Catalase, found in Ipomoea batatas (Sweet potato).